A 206-amino-acid chain; its full sequence is GTP cyclohydrolase 1 (206 aa).

Positions 98, 101, and 169 each coordinate Zn(2+).

This sequence belongs to the GTP cyclohydrolase I family. Toroid-shaped homodecamer, composed of two pentamers of five dimers.

It catalyses the reaction GTP + H2O = 7,8-dihydroneopterin 3'-triphosphate + formate + H(+). It functions in the pathway cofactor biosynthesis; 7,8-dihydroneopterin triphosphate biosynthesis; 7,8-dihydroneopterin triphosphate from GTP: step 1/1. The chain is GTP cyclohydrolase 1 from Helicobacter hepaticus (strain ATCC 51449 / 3B1).